Consider the following 143-residue polypeptide: Small ribosomal subunit protein bS6 (143 aa).

A disordered region spans residues 96-143; that stretch reads VTEASPMAAAKEERRDDRREVKKDVAAAPVEAKEDSVEEKSEEAASEE. Residues 105-143 are compositionally biased toward basic and acidic residues; that stretch reads AKEERRDDRREVKKDVAAAPVEAKEDSVEEKSEEAASEE.

Belongs to the bacterial ribosomal protein bS6 family.

Its function is as follows. Binds together with bS18 to 16S ribosomal RNA. This chain is Small ribosomal subunit protein bS6, found in Colwellia psychrerythraea (strain 34H / ATCC BAA-681) (Vibrio psychroerythus).